A 280-amino-acid polypeptide reads, in one-letter code: Aspartate/glutamate leucyltransferase (280 aa).

This sequence belongs to the R-transferase family. Bpt subfamily.

Its subcellular location is the cytoplasm. It catalyses the reaction N-terminal L-glutamyl-[protein] + L-leucyl-tRNA(Leu) = N-terminal L-leucyl-L-glutamyl-[protein] + tRNA(Leu) + H(+). It carries out the reaction N-terminal L-aspartyl-[protein] + L-leucyl-tRNA(Leu) = N-terminal L-leucyl-L-aspartyl-[protein] + tRNA(Leu) + H(+). Its function is as follows. Functions in the N-end rule pathway of protein degradation where it conjugates Leu from its aminoacyl-tRNA to the N-termini of proteins containing an N-terminal aspartate or glutamate. The protein is Aspartate/glutamate leucyltransferase of Cereibacter sphaeroides (strain KD131 / KCTC 12085) (Rhodobacter sphaeroides).